Here is a 213-residue protein sequence, read N- to C-terminus: Cytochrome b6 (213 aa).

A helical transmembrane segment spans residues 30–50 (IFFCLGGLTLLCFIVQCLTGI). Cys-33 is a binding site for heme c. His-84 and His-98 together coordinate heme b. 3 helical membrane passes run 88 to 108 (CQLM…TGAF), 114 to 134 (LNWV…FTGY), and 184 to 204 (LHVM…FIMI). 2 residues coordinate heme b: His-185 and His-200.

It belongs to the cytochrome b family. PetB subfamily. The subunits of the cytochrome bc complex are a Rieske Fe-S protein (PetC), cytochrome b6 (PetB), subunit IV (PetD), and a diheme cytochrome c (PetX). Heme b is required as a cofactor. Heme c serves as cofactor.

Its subcellular location is the cell membrane. Its function is as follows. Component of the cytochrome bc complex which donates electrons to the photosynthetic reaction center. This chain is Cytochrome b6, found in Heliomicrobium gestii (Heliobacterium gestii).